An 88-amino-acid chain; its full sequence is uncharacterized protein (88 aa).

The tract at residues 1–88 is disordered; the sequence is MPHLPELSKQ…IRRGNPSGVA (88 aa). The segment covering 21–65 has biased composition (basic and acidic residues); that stretch reads YRAKGEDLENSHHNNESRLAEGVHYDRNKAPALQEREKASTEKVN.

Its function is as follows. Involved in osmoadaptation. This is an uncharacterized protein from Emericella nidulans (strain FGSC A4 / ATCC 38163 / CBS 112.46 / NRRL 194 / M139) (Aspergillus nidulans).